The chain runs to 199 residues: Adenylyl-sulfate kinase (199 aa).

35–42 (GLSGSGKS) serves as a coordination point for ATP. The active-site Phosphoserine intermediate is the serine 109.

Belongs to the APS kinase family.

The enzyme catalyses adenosine 5'-phosphosulfate + ATP = 3'-phosphoadenylyl sulfate + ADP + H(+). It functions in the pathway sulfur metabolism; hydrogen sulfide biosynthesis; sulfite from sulfate: step 2/3. Functionally, catalyzes the synthesis of activated sulfate. The chain is Adenylyl-sulfate kinase from Clostridium kluyveri (strain ATCC 8527 / DSM 555 / NBRC 12016 / NCIMB 10680 / K1).